A 630-amino-acid polypeptide reads, in one-letter code: L-amino-acid oxidase (630 aa).

The N-terminal stretch at 1 to 21 is a signal peptide; the sequence is MAGLALRLVLAATLLGLAGSL. A disulfide bridge connects residues cysteine 35 and cysteine 198. N-linked (GlcNAc...) asparagine glycosylation occurs at asparagine 53. Residues 68–69, 88–89, arginine 96, and 112–115 contribute to the FAD site; these read VA, EA, and GAMR. Arginine 115 is a binding site for substrate. N-linked (GlcNAc...) asparagine glycosylation is found at asparagine 133 and asparagine 219. Valine 286 is an FAD binding site. Residue tyrosine 395 coordinates substrate. FAD-binding positions include glutamate 479 and 486 to 491; that span reads GWVETA. Residue 486–487 participates in substrate binding; the sequence is GW. The segment at 532–554 is disordered; the sequence is GERPEEQQAREEVSPDEQEPSHK.

This sequence belongs to the flavin monoamine oxidase family. FIG1 subfamily. Requires FAD as cofactor. As to expression, primarily found in immune tissues. Primarily found in immune tissues, mostly in B-lymphocytes. In terms of tissue distribution, restricted to the testis, predominantly in Sertoli cells at the periphery of the ducts, and the brain, including Purkinje cells, hippocampus and mitral cells in the olfactory bulb. No isoform 2 expression in fetal tissues.

It localises to the secreted. It is found in the cytoplasmic vesicle. The protein localises to the secretory vesicle. Its subcellular location is the acrosome. The protein resides in the lysosome. The catalysed reaction is an L-alpha-amino acid + O2 + H2O = a 2-oxocarboxylate + H2O2 + NH4(+). It carries out the reaction L-tryptophan + O2 + H2O = indole-3-pyruvate + H2O2 + NH4(+). It catalyses the reaction L-phenylalanine + O2 + H2O = 3-phenylpyruvate + H2O2 + NH4(+). The enzyme catalyses L-tyrosine + O2 + H2O = 3-(4-hydroxyphenyl)pyruvate + H2O2 + NH4(+). The catalysed reaction is L-arginine + O2 + H2O = 5-guanidino-2-oxopentanoate + H2O2 + NH4(+). It functions in the pathway amino-acid degradation; L-tryptophan degradation via pyruvate pathway. Secreted L-amino-acid oxidase that acts as a key immunoregulator. Has preference for L-aromatic amino acids: converts phenylalanine (Phe), tyrosine (Tyr) and tryptophan (Trp) to phenylpyruvic acid (PP), hydroxyphenylpyruvic acid (HPP), and indole-3-pyruvic acid (I3P), respectively. Also has weak L-arginine oxidase activity. Acts as a negative regulator of anti-tumor immunity by mediating Trp degradation via an indole pyruvate pathway that activates the transcription factor AHR. IL4I1-mediated Trp catabolism generates I3P, giving rise to indole metabolites (indole-3-acetic acid (IAA) and indole-3-aldehyde (I3A)) and kynurenic acid, which act as ligands for AHR, a ligand-activated transcription factor that plays important roles in immunity and cancer. AHR activation by indoles following IL4I1-mediated Trp degradation enhances tumor progression by promoting cancer cell motility and suppressing adaptive immunity. Also has an immunoregulatory function in some immune cell, probably by mediating Trp degradation and promoting downstream AHR activation: inhibits T-cell activation and proliferation, promotes the differentiation of naive CD4(+) T-cells into FOXP3(+) regulatory T-cells (Treg) and regulates the development and function of B-cells. Also regulates M2 macrophage polarization by inhibiting T-cell activation. Also has antibacterial properties by inhibiting growth of Gram negative and Gram positive bacteria through the production of NH4(+) and H2O2. The sequence is that of L-amino-acid oxidase from Mus musculus (Mouse).